Consider the following 274-residue polypeptide: Cytochrome c oxidase subunit 3 (274 aa).

Residues Ala2 to Ser15 are Cytoplasmic-facing. The helical transmembrane segment at Ile16–Met36 threads the bilayer. Residues Lys37–Gly48 are Periplasmic-facing. A helical transmembrane segment spans residues Pro49 to Gly77. At Glu78 to His79 the chain is on the cytoplasmic side. Residues Thr80–Tyr115 traverse the membrane as a helical segment. Residues Pro116–Trp139 are Periplasmic-facing. The helical transmembrane segment at His140–Glu166 threads the bilayer. The Cytoplasmic portion of the chain corresponds to Gly167–Asp168. A helical membrane pass occupies residues Arg169 to Ala197. Over Ala198–Asp203 the chain is Periplasmic. A helical membrane pass occupies residues Thr204–Lys237. The Cytoplasmic portion of the chain corresponds to Gly238–Gln244. Residues His245–Arg274 form a helical membrane-spanning segment.

Belongs to the cytochrome c oxidase subunit 3 family.

Its subcellular location is the cell inner membrane. The enzyme catalyses 4 Fe(II)-[cytochrome c] + O2 + 8 H(+)(in) = 4 Fe(III)-[cytochrome c] + 2 H2O + 4 H(+)(out). This chain is Cytochrome c oxidase subunit 3 (ctaE), found in Paracoccus denitrificans.